We begin with the raw amino-acid sequence, 162 residues long: Endoribonuclease YbeY (162 aa).

3 residues coordinate Zn(2+): histidine 117, histidine 121, and histidine 127.

This sequence belongs to the endoribonuclease YbeY family. Zn(2+) is required as a cofactor.

The protein localises to the cytoplasm. Single strand-specific metallo-endoribonuclease involved in late-stage 70S ribosome quality control and in maturation of the 3' terminus of the 16S rRNA. This is Endoribonuclease YbeY from Francisella tularensis subsp. holarctica (strain OSU18).